We begin with the raw amino-acid sequence, 69 residues long: Photosystem I reaction center subunit IV (69 aa).

It belongs to the PsaE family.

The protein localises to the cellular thylakoid membrane. Its function is as follows. Stabilizes the interaction between PsaC and the PSI core, assists the docking of the ferredoxin to PSI and interacts with ferredoxin-NADP oxidoreductase. The protein is Photosystem I reaction center subunit IV of Prochlorococcus marinus (strain MIT 9215).